The sequence spans 263 residues: MAVNVYSTSVTSDNLSRHDMLAWINESLQLTLTKIEQLCSGAAYCQFMDMLFPGSVALKKVKFQAKLEHEYIQNFKVLQAGFKRMGVDKIIPVDKLVKGKFQDNFEFVQWFKKFFDANYDGKEYDPVAARQGQETVAPNLVAPVMNKPKKPLGTGSAAPQRPIVAQRTPATPKGGTGMVKKAAGDDESAGLIEQINVLKLTVEDLEKERDFYFGKLRNIELICQENEGENDPVLQRIVEILYATDEGFVIPDEGAPQEEQEEY.

The Calponin-homology (CH) domain maps to 14–116 (NLSRHDMLAW…FVQWFKKFFD (103 aa)). An EB1 C-terminal domain is found at 180 to 250 (KKAAGDDESA…LYATDEGFVI (71 aa)).

Belongs to the MAPRE family.

Its subcellular location is the cytoplasm. The protein resides in the cytoskeleton. It is found in the microtubule organizing center. The protein localises to the centrosome. It localises to the golgi apparatus. Its subcellular location is the spindle. The protein resides in the spindle pole. Its function is as follows. Plus-end tracking protein (+TIP) that binds to the plus-end of microtubules and regulates the dynamics of the microtubule cytoskeleton. Promotes cytoplasmic microtubule nucleation and elongation. Involved in mitotic spindle positioning by stabilizing microtubules and promoting dynamic connection between astral microtubules and the cortex during mitotic chromosome segregation. The protein is Microtubule-associated protein RP/EB family member 1 (MAPRE1) of Coturnix coturnix (Common quail).